The sequence spans 427 residues: MRELYLKTLKKEVVPSEGCTEPIAIAYAASIAAEHLKGEIKEVNIYLSKNVIKNALGVGIPGTGGVGIEIAAALGISIQKSYKKLTILSNFTEDELKKAKEIVDKNIINIKQKNTNKALYIEVELLSETSKAKVIIEDTHTNVTLIECDDEIIMDNNSEVSEDLEEDYKLFKIADIYNFAKEVDFDHIKFILESAKMNEKVSEEGLKGDYGLQVGSKIIQKGNFNLFSNDASNKIIAASAAASDARMDGCAMPIMTTAGSGNQGIACSIPVAQTARLLDKSEEELARALVLSNLVTIRIKKHMGRLSPLCGAGIAGATGASCGITYLLGGDLENINYCINNMISDLSGMICDGAKETCALKIATGTNAAIQCANLAINGISATANDGIVAKDVEETIESIETLIQNGFKNVDDTILNIMLEKKKNNK.

It belongs to the UPF0597 family.

This is UPF0597 protein CPF_0803 from Clostridium perfringens (strain ATCC 13124 / DSM 756 / JCM 1290 / NCIMB 6125 / NCTC 8237 / Type A).